The following is a 196-amino-acid chain: Nodulation protein A (196 aa).

Belongs to the NodA family.

It is found in the cytoplasm. In terms of biological role, N-acyltransferase required for nodulation. Acts in the production of a small, heat-stable compound (Nod) that stimulates mitosis in various plant protoplasts. This is Nodulation protein A from Sinorhizobium terangae.